The following is a 316-amino-acid chain: Mitochondrial distribution and morphology protein 12 (316 aa).

In terms of domain architecture, SMP-LTD spans 1-312; it reads MSIDLEWNGL…FPNFHTLVLG (312 aa).

It belongs to the MDM12 family. Component of the ER-mitochondria encounter structure (ERMES) or MDM complex, composed of MMM1, MDM10, MDM12 and MDM34. An MMM1 homodimer associates with one molecule of MDM12 on each side in a pairwise head-to-tail manner, and the SMP-LTD domains of MMM1 and MDM12 generate a continuous hydrophobic tunnel for phospholipid trafficking.

The protein resides in the mitochondrion outer membrane. It is found in the endoplasmic reticulum membrane. In terms of biological role, component of the ERMES/MDM complex, which serves as a molecular tether to connect the endoplasmic reticulum (ER) and mitochondria. Components of this complex are involved in the control of mitochondrial shape and protein biogenesis, and function in nonvesicular lipid trafficking between the ER and mitochondria. MDM12 is required for the interaction of the ER-resident membrane protein MMM1 and the outer mitochondrial membrane-resident beta-barrel protein MDM10. The MDM12-MMM1 subcomplex functions in the major beta-barrel assembly pathway that is responsible for biogenesis of all mitochondrial outer membrane beta-barrel proteins, and acts in a late step after the SAM complex. The MDM10-MDM12-MMM1 subcomplex further acts in the TOM40-specific pathway after the action of the MDM12-MMM1 complex. Essential for establishing and maintaining the structure of mitochondria and maintenance of mtDNA nucleoids. This is Mitochondrial distribution and morphology protein 12 from Postia placenta (strain ATCC 44394 / Madison 698-R) (Brown rot fungus).